The primary structure comprises 259 residues: Sesquipedalian-2 (259 aa).

Residues 17 to 121 (PADHMGFLRT…WVKVLSRASF (105 aa)) enclose the PH domain. Positions 124–149 (MRLVVRELESQLQDARQSLALQRRSS) form a coiled coil. The F&amp;H signature appears at 223 to 235 (CFSTLHDWYGQEI).

The protein belongs to the sesquipedalian family. As to quaternary structure, forms homodimers and heterodimers with PHETA1. Interacts with OCRL and INPP5B.

Its subcellular location is the early endosome. It localises to the recycling endosome. It is found in the golgi apparatus. The protein localises to the trans-Golgi network. The protein resides in the cytoplasmic vesicle. Its subcellular location is the clathrin-coated vesicle. Its function is as follows. Plays a role in endocytic trafficking. Required for receptor recycling from endosomes, both to the trans-Golgi network and the plasma membrane. This Homo sapiens (Human) protein is Sesquipedalian-2.